The sequence spans 529 residues: Nuclear distribution protein PAC1 (529 aa).

The stretch at 68–89 forms a coiled coil; sequence RLQHKIIDLEGEVSNLRTVIDS. WD repeat units follow at residues 120 to 159, 165 to 218, 221 to 261, 264 to 318, 321 to 395, 416 to 455, and 496 to 529; these read QSHQLVQSVSIHPALPIILGGCSDGSLIIWNLVNDESLIP, AHIR…HIRT, GHEH…CIKT, GHSD…GLSL, GHTH…FRPH, GHQSWVKSLHIHPNGRFVFSGSDDKTIKIWDLSSLNVNGR, and TEEDRRNELMKSIESKIRCLFISGGVDNCIRLWS.

Belongs to the WD repeat LIS1/nudF family. As to quaternary structure, self-associates. Interacts with NDL1 and dynein.

The protein localises to the cytoplasm. The protein resides in the cytoskeleton. It is found in the spindle pole. In terms of biological role, positively regulates the activity of the minus-end directed microtubule motor protein dynein. Plays a central role in positioning the mitotic spindle at the bud neck during cell division. Targets cytoplasmic dynein to microtubule plus ends, thereby promoting dynein-mediated microtubule sliding along the bud cortex and consequently the movement of the mitotic spindle to the bud neck. This chain is Nuclear distribution protein PAC1, found in Debaryomyces hansenii (strain ATCC 36239 / CBS 767 / BCRC 21394 / JCM 1990 / NBRC 0083 / IGC 2968) (Yeast).